The chain runs to 97 residues: Non-pathogenic pore-forming peptide amoebapore A (97 aa).

Positions 1 to 20 are cleaved as a signal peptide; sequence MKAIVFVLIFAVAFAVTLRQ. The region spanning 21-97 is the Saposin B-type domain; it reads GPIVCNLCTG…NAICAKIHAC (77 aa). Intrachain disulfides connect cysteine 25–cysteine 97, cysteine 28–cysteine 91, and cysteine 55–cysteine 66.

As to quaternary structure, monomer. Homodimer. Hexamer; formed during insertion in the membrane.

The protein localises to the cytoplasmic granule. Functionally, forms pores in the cell membrane of host cells. Implicated in the cytolytic activity of the parasite. Pore forming activity is lower compared to the activity of ameobapore A from the pathogenic strain HM-1:IMSS. This is Non-pathogenic pore-forming peptide amoebapore A from Entamoeba histolytica.